Reading from the N-terminus, the 61-residue chain is N-acetyl-D-glucosamine kinase (61 aa).

Residue Tyr30 is modified to Phosphotyrosine. Position 45 (Ser45) interacts with ATP.

Belongs to the eukaryotic-type N-acetylglucosamine kinase family. In terms of assembly, homodimer.

The catalysed reaction is N-acetyl-D-glucosamine + ATP = N-acetyl-D-glucosamine 6-phosphate + ADP + H(+). It carries out the reaction aldehydo-N-acetyl-D-mannosamine + ATP = aldehydo-N-acetyl-D-mannosamine 6-phosphate + ADP + H(+). The enzyme catalyses N-acetyl-D-muramoyl-L-alanyl-D-isoglutamine + ATP = 6-O-phospho-N-acetyl-D-muramoyl-L-alanyl-D-isoglutamine + ADP + H(+). It participates in amino-sugar metabolism; N-acetylneuraminate degradation. Converts endogenous N-acetylglucosamine (GlcNAc), a major component of complex carbohydrates, from lysosomal degradation or nutritional sources into GlcNAc 6-phosphate. Also has N-acetylmannosamine (ManNAc) kinase activity. Involved in the N-glycolylneuraminic acid (Neu5Gc) degradation pathway. Also involved in innate immunity by promoting detection of bacterial peptidoglycan by NOD2: acts by catalyzing phosphorylation of muramyl dipeptide (MDP), a fragment of bacterial peptidoglycan, to generate 6-O-phospho-muramyl dipeptide, which acts as a direct ligand for NOD2. The protein is N-acetyl-D-glucosamine kinase of Mesocricetus auratus (Golden hamster).